Here is a 95-residue protein sequence, read N- to C-terminus: EFTISFSSPVISTGQHIDVGDEDYHDGDDDVDYTDDVDDVDDSHGSPSQLLQGGYQRNQHYGGGNYQSGYYRPNKQHGNGYGGQYPKKYGSGHKY.

The segment covering 1–15 (EFTISFSSPVISTGQ) has biased composition (polar residues). The tract at residues 1–95 (EFTISFSSPV…PKKYGSGHKY (95 aa)) is disordered. Over residues 20–41 (GDEDYHDGDDDVDYTDDVDDVD) the composition is skewed to acidic residues. Residues 45–59 (GSPSQLLQGGYQRNQ) are compositionally biased toward polar residues.

Belongs to the immunogenic miracidial antigen family.

The sequence is that of Immunogenic miracidial antigen 8C (8C) from Schistosoma japonicum (Blood fluke).